The sequence spans 715 residues: MSMFNKVVKEFQWGQHKVRLETGEIARQASGAVIVDVEDTVVLATVVGAKSAKPGQDFFPLTVDYIEKTYSAGKIPGGFFRREGRPSEHETLTSRLIDRPLRPLFPEGFYNEVQVVIHVLSVNPEIPADIPALIGASAALAVSGLPFNGPVGAARVAYVNDQYVLNPTREQLKSSRLDLVVAGTERAVLMVESEADQLPEEVMLGAVVFGHEQMQTAIDAIHELVRDGGKPEWDWQPAPKDEALIARVTEIAQPELLAAYQIRDKQARSTKLKEVYAATSAKLEEDALAAGTVAADKATVGNILFDLEAKIVRGQILNGEPRIDGRDTRTVRPIEIRTGVLPRTHGSALFTRGETQALVVATLGTKGDEQIIDALEGEYRERFMLHYNMPPFATGETGRVGSPKRREIGHGRLAKRALVACLPSAEEFGYSIRVVSEITESNGSSSMASVCGGCLALMDAGVPMKAHVAGIAMGLILEGNKFAVLTDILGDEDHLGDMDFKVAGTAQGVTALQMDIKIQGITKEIMQVALAQAKEGRMHILGKMTEAVAGANTQLSEFAPRMITIKINPEKIRDVIGKGGSVIRALTEETGTTIDISDDGVVTIASTSSEGMAEAKKRIENITAEIEVGQVYEGTVLKLLDFGAIVNLLPGKDGLLHISEIVNERVKDINDYLKEGQQVKVKVIQTDEKGRVRLSAKALLNEAAAAAQSDTPPQQ.

Residues aspartate 493 and aspartate 499 each contribute to the Mg(2+) site. A KH domain is found at proline 560–isoleucine 619. An S1 motif domain is found at glycine 629–lysine 697.

This sequence belongs to the polyribonucleotide nucleotidyltransferase family. Requires Mg(2+) as cofactor.

It is found in the cytoplasm. The catalysed reaction is RNA(n+1) + phosphate = RNA(n) + a ribonucleoside 5'-diphosphate. Functionally, involved in mRNA degradation. Catalyzes the phosphorolysis of single-stranded polyribonucleotides processively in the 3'- to 5'-direction. This Burkholderia multivorans (strain ATCC 17616 / 249) protein is Polyribonucleotide nucleotidyltransferase.